The chain runs to 498 residues: UPF0371 protein cauri_2449 (498 aa).

The protein belongs to the UPF0371 family.

The polypeptide is UPF0371 protein cauri_2449 (Corynebacterium aurimucosum (strain ATCC 700975 / DSM 44827 / CIP 107346 / CN-1) (Corynebacterium nigricans)).